A 304-amino-acid chain; its full sequence is Voltage-dependent anion channel-forming protein YneE (304 aa).

A run of 4 helical transmembrane segments spans residues 28 to 48 (LLLN…YTML), 50 to 70 (IKFT…FLGF), 209 to 229 (AYTL…PFAL), and 235 to 255 (YMTP…DALA).

The protein belongs to the anion channel-forming bestrophin (TC 1.A.46) family.

The protein localises to the cell membrane. The polypeptide is Voltage-dependent anion channel-forming protein YneE (yneE) (Salmonella typhi).